A 752-amino-acid chain; its full sequence is Glutamate carboxypeptidase 2 (752 aa).

Residues 1–19 (MWNAQQDSDSAEALGRRQR) lie on the Cytoplasmic side of the membrane. The residue at position 10 (S10) is a Phosphoserine. A helical; Signal-anchor for type II membrane protein transmembrane segment spans residues 20 to 44 (WFCAGTLVLAFTGTFIIGFLFGWFI). The Extracellular portion of the chain corresponds to 45–752 (KPSNDSTSSV…AAAETLREVD (708 aa)). N-linked (GlcNAc...) asparagine glycosylation is found at N48, N78, N123, N155, and N197. The substrate site is built by R212 and N259. 2 residues coordinate Ca(2+): T271 and Y274. The interval 276 to 589 (ANEYAYRHEF…QVRGAMVFEL (314 aa)) is NAALADase. N338 carries an N-linked (GlcNAc...) asparagine glycan. Zn(2+) is bound by residues H379 and D389. A substrate-binding site is contributed by E426. E426 serves as the catalytic Nucleophile; for NAALADase activity. E427 serves as a coordination point for Zn(2+). Ca(2+)-binding residues include E435 and E438. D455 contacts Zn(2+). N-linked (GlcNAc...) asparagine glycosylation is found at N461 and N478. Residues 519 to 520 (SG), N521, 536 to 538 (RAR), Y554, and 554 to 555 (YH) contribute to the substrate site. Zn(2+) is bound at residue H555. An N-linked (GlcNAc...) asparagine glycan is attached at N615. S630 functions as the Charge relay system in the catalytic mechanism. The N-linked (GlcNAc...) asparagine glycan is linked to N640. Residues D668 and H691 each act as charge relay system in the active site. 701 to 702 (KY) is a substrate binding site.

The protein belongs to the peptidase M28 family. M28B subfamily. In terms of assembly, homodimer. Zn(2+) is required as a cofactor. Widely expressed throughout brain regions with highest levels in the hippocampus, dentate gyrus, priform cortex, choroid plexus of ventricles, pineal gland, anterior lobe of the pituitary gland and supraoptic nucleus. High levels also found in the cerebral cortex, substantia nigra, pontine nucleus and the granule cell layer of cerebellum. Highly expressed in astrocytes and non-myelinating Schwann cells. Also expressed in kidney, localizing to the proximal brush border of the renal tube.

The protein localises to the cell membrane. The catalysed reaction is Release of an unsubstituted, C-terminal glutamyl residue, typically from Ac-Asp-Glu or folylpoly-gamma-glutamates.. With respect to regulation, the NAALADase activity is inhibited by beta-NAAG, quisqualic acid and 2-(phosphonomethyl)glutaric acid (PMG). Functionally, has both folate hydrolase and N-acetylated-alpha-linked-acidic dipeptidase (NAALADase) activity. Has a preference for tri-alpha-glutamate peptides. In the intestine, required for the uptake of folate. In the brain, modulates excitatory neurotransmission through the hydrolysis of the neuropeptide, N-aceylaspartylglutamate (NAAG), thereby releasing glutamate. In terms of biological role, also exhibits a dipeptidyl-peptidase IV type activity. In vitro, cleaves Gly-Pro-AMC. This Rattus norvegicus (Rat) protein is Glutamate carboxypeptidase 2 (Folh1).